Here is a 243-residue protein sequence, read N- to C-terminus: Ornithine decarboxylase antizyme 3 (243 aa).

3 positions are modified to phosphoserine: Ser-6, Ser-9, and Ser-12.

Belongs to the ODC antizyme family. In terms of assembly, interacts with ODC1 and thereby sterically blocks ODC homodimerization. Interacts with AZIN2; this interaction disrupts the interaction between the antizyme and ODC1. Interacts with GGN. Testis specific. Expressed throughout the differentiation process from spermatids to spermatozoa in the inner part of the seminiferous tubules.

The protein resides in the nucleus. Its subcellular location is the cytoplasm. Functionally, ornithine decarboxylase (ODC) antizyme protein that negatively regulates ODC activity and intracellular polyamine biosynthesis and uptake in response to increased intracellular polyamine levels. Binds to ODC monomers, inhibiting the assembly of the functional ODC homodimers. Does not target the ODC monomers for degradation, which allows a protein synthesis-independent restoration of ODC activity. Stabilizes AZIN2 by interfering with its ubiquitination. Involved in the translocation of AZNI2 from ER-Golgi intermediate compartment (ERGIC) to the cytosol. Probably plays a key role in spermatogenesis by regulating the intracellular concentration of polyamines in haploid germ cells. The sequence is that of Ornithine decarboxylase antizyme 3 (Oaz3) from Mus musculus (Mouse).